Consider the following 109-residue polypeptide: Archaeosine synthase (109 aa).

Cysteine 21 acts as the Thioimide intermediate in catalysis. Aspartate 28 (proton donor/acceptor) is an active-site residue. Substrate is bound by residues aspartate 28, 43-46 (LAIE), and 62-63 (HE).

The protein belongs to the archaeosine synthase type 2 family. As to quaternary structure, forms a symmetric tunnel-fold (T-fold) homodecamer of two head-to-head facing pentameric subunits, with 10 active sites at the intermonomer interfaces.

The enzyme catalyses 7-cyano-7-carbaguanosine(15) in tRNA + NH4(+) = archaeosine(15) in tRNA. It participates in tRNA modification; archaeosine-tRNA biosynthesis. Functionally, is responsible for the final step in the biosynthesis of archaeosine, a modified nucleoside present in the dihydrouridine loop (D-loop) of archaeal tRNA. Catalyzes the conversion of 7-cyano-7-deazaguanine (preQ0)-modified tRNA to archaeosine-tRNA, transforming a nitrile group to a formamidine group. Can use neither glutamine nor asparagine as amino donor in vitro, is only able to utilize free ammonium. However, the enzyme might function in vivo with a partner that serves to generate ammonium. The sequence is that of Archaeosine synthase from Pyrobaculum calidifontis (strain DSM 21063 / JCM 11548 / VA1).